The primary structure comprises 62 residues: Sperm protamine P1 (62 aa).

The disordered stretch occupies residues 1–62; the sequence is MARYRRHSRS…RRYSRRRRRY (62 aa).

This sequence belongs to the protamine P1 family. As to expression, testis.

The protein localises to the nucleus. The protein resides in the chromosome. Functionally, protamines substitute for histones in the chromatin of sperm during the haploid phase of spermatogenesis. They compact sperm DNA into a highly condensed, stable and inactive complex. The protein is Sperm protamine P1 (PRM1) of Sminthopsis longicaudata (Long-tailed dunnart).